A 148-amino-acid chain; its full sequence is UPF0178 protein LPC_0108 (148 aa).

The protein belongs to the UPF0178 family.

This is UPF0178 protein LPC_0108 from Legionella pneumophila (strain Corby).